We begin with the raw amino-acid sequence, 34 residues long: Sarcoplasmic/endoplasmic reticulum calcium ATPase regulator DWORF (34 aa).

A helical transmembrane segment spans residues 12–32; the sequence is IVPILLLVGWIVGCIIVIYIV.

In terms of assembly, homooligomer. Can also form heterooligomers with other sarcoplasmic/endoplasmic reticulum calcium ATPase (SERCA) regulators ARLN, ERLN, PLN and SLN. Monomer. Interacts with ATP2A1/SERCA1; the interaction results in activation of ATP2A1. Interacts as a monomer with ATP2A2/SERCA2; the interaction results in activation of ATP2A2. In terms of tissue distribution, highly expressed in heart (at protein level). Detected in heart and soleus, a postural muscle group of the hindlimb containing the highest enrichment of slow-twitch muscle fibers. Also expressed in diaphragm, which contains some slow-twitch fibers. Not detected in the quadriceps, a fast-twitch muscle group, or in cardiac atrial muscle. Not expressed in the prenatal heart but gradually increases in abundance postnatally.

It localises to the sarcoplasmic reticulum membrane. In terms of biological role, enhances the activity of ATP2A1/SERCA1 ATPase in sarcoplasmic reticulum by displacing ATP2A1/SERCA1 inhibitors, thereby acting as a key regulator of skeletal muscle activity. Also enhances the activity of the ATP2A2/SERCA2 ATPase. Does not directly stimulate SERCA pump activity. Binds preferentially to the phosphorylated E1 and E2 conformational forms of ATP2A2 which predominate at high Ca(2+) concentrations during the systolic phase of the cardiac cycle. Competes with ATP2A2 inhibitor phospholamban (PLN) for binding to ATP2A2 and displaces PLN. Can activate ATP2A2 directly in the absence of PLN. Also enhances sarcoplasmic reticulum Ca(2+) uptake and myocyte contractility by displacing the SERCA inhibitory peptides sarcolipin (SLN) and myoregulin (MRLN). In Mus musculus (Mouse), this protein is Sarcoplasmic/endoplasmic reticulum calcium ATPase regulator DWORF.